A 114-amino-acid chain; its full sequence is Large ribosomal subunit protein bL19 (114 aa).

This sequence belongs to the bacterial ribosomal protein bL19 family.

This protein is located at the 30S-50S ribosomal subunit interface and may play a role in the structure and function of the aminoacyl-tRNA binding site. The protein is Large ribosomal subunit protein bL19 of Lysinibacillus sphaericus (strain C3-41).